A 338-amino-acid chain; its full sequence is Citramalyl-CoA lyase, mitochondrial (338 aa).

Residues 1–20 (MALCVLQNAVRGAAALPRLK) constitute a mitochondrion transit peptide. Substrate-binding residues include tyrosine 48, lysine 55, and lysine 59. An N6-acetyllysine mark is found at lysine 55, lysine 59, and lysine 64. Lysine 80 and lysine 90 each carry N6-acetyllysine; alternate. Residues lysine 80 and lysine 90 each carry the N6-succinyllysine; alternate modification. Position 105 (arginine 105) interacts with substrate. Mg(2+) is bound by residues glutamate 169 and aspartate 204. Position 270–271 (270–271 (IH)) interacts with substrate. N6-succinyllysine is present on lysine 307. Aspartate 318 is a catalytic residue.

The protein belongs to the HpcH/HpaI aldolase family. Citrate lyase beta subunit-like subfamily. Homotrimer. Mg(2+) serves as cofactor.

It localises to the mitochondrion. It carries out the reaction glyoxylate + acetyl-CoA + H2O = (S)-malate + CoA + H(+). It catalyses the reaction propanoyl-CoA + glyoxylate + H2O = 3-methylmalate + CoA + H(+). The catalysed reaction is (3S)-citramalyl-CoA = pyruvate + acetyl-CoA. The enzyme catalyses (S)-malyl-CoA + H2O = (S)-malate + CoA + H(+). In terms of biological role, mitochondrial citramalyl-CoA lyase indirectly involved in the vitamin B12 metabolism. Converts citramalyl-CoA into acetyl-CoA and pyruvate in the C5-dicarboxylate catabolism pathway. The C5-dicarboxylate catabolism pathway is required to detoxify itaconate, a vitamin B12-poisoning metabolite. Also acts as a malate synthase in vitro, converting glyoxylate and acetyl-CoA to malate. Also displays malyl-CoA thioesterase activity. Also acts as a beta-methylmalate synthase in vitro, by mediating conversion of glyoxylate and propionyl-CoA to beta-methylmalate. Also has very weak citramalate synthase activity in vitro. This chain is Citramalyl-CoA lyase, mitochondrial (Clybl), found in Rattus norvegicus (Rat).